The sequence spans 96 residues: CNQSTLQMLLEIFVWIGYVSSGVNPLVYTLFNKTFRDAFGRYITCNYKATKSVKTVRKCSNKIYFRNPMTENSKFFMKHGMRNGINSTMYQSPVRL.

The Extracellular segment spans residues 1-8 (CNQSTLQM). A glycan (N-linked (GlcNAc...) asparagine) is linked at Asn-2. Residues 9 to 30 (LLEIFVWIGYVSSGVNPLVYTL) form a helical membrane-spanning segment. The NPxxY motif; important for ligand-induced conformation changes and signaling signature appears at 24 to 28 (NPLVY). Residues 31 to 96 (FNKTFRDAFG…STMYQSPVRL (66 aa)) are Cytoplasmic-facing. Cys-45 carries S-palmitoyl cysteine lipidation.

The protein belongs to the G-protein coupled receptor 1 family. As to quaternary structure, interacts (via C-terminus) with MPDZ.

It localises to the cell membrane. The protein resides in the synapse. It is found in the synaptosome. In terms of biological role, G-protein coupled receptor for 5-hydroxytryptamine (serotonin). Also functions as a receptor for various ergot alkaloid derivatives and psychoactive substances. Ligand binding causes a conformation change that triggers signaling via guanine nucleotide-binding proteins (G proteins) and modulates the activity of downstream effectors. HTR2B is coupled to G(q)/G(11) G alpha proteins and activates phospholipase C-beta, releasing diacylglycerol (DAG) and inositol 1,4,5-trisphosphate (IP3) second messengers that modulate the activity of phosphatidylinositol 3-kinase and promote the release of Ca(2+) ions from intracellular stores, respectively. Beta-arrestin family members inhibit signaling via G proteins and mediate activation of alternative signaling pathways. Plays a role in the regulation of dopamine and 5-hydroxytryptamine release, 5-hydroxytryptamine uptake and in the regulation of extracellular dopamine and 5-hydroxytryptamine levels, and thereby affects neural activity. May play a role in the perception of pain. Plays a role in the regulation of behavior, including impulsive behavior. Required for normal proliferation of embryonic cardiac myocytes and normal heart development. Protects cardiomyocytes against apoptosis. Plays a role in the adaptation of pulmonary arteries to chronic hypoxia. Plays a role in vasoconstriction. Required for normal osteoblast function and proliferation, and for maintaining normal bone density. Required for normal proliferation of the interstitial cells of Cajal in the intestine. This chain is 5-hydroxytryptamine receptor 2B (HTR2B), found in Cavia porcellus (Guinea pig).